A 618-amino-acid chain; its full sequence is Membrane protein insertase YidC (618 aa).

Helical transmembrane passes span 3-23 (KNTI…SFLS), 363-383 (WGLS…IVVF), 439-459 (LPML…PSAI), 478-498 (FITF…FCLL), 520-540 (PQMA…LFVL), and 545-565 (SGLN…MIIL).

This sequence belongs to the OXA1/ALB3/YidC family. Type 1 subfamily. As to quaternary structure, interacts with the Sec translocase complex via SecD. Specifically interacts with transmembrane segments of nascent integral membrane proteins during membrane integration.

It localises to the cell inner membrane. In terms of biological role, required for the insertion and/or proper folding and/or complex formation of integral membrane proteins into the membrane. Involved in integration of membrane proteins that insert both dependently and independently of the Sec translocase complex, as well as at least some lipoproteins. Aids folding of multispanning membrane proteins. This chain is Membrane protein insertase YidC, found in Bacteroides fragilis (strain ATCC 25285 / DSM 2151 / CCUG 4856 / JCM 11019 / LMG 10263 / NCTC 9343 / Onslow / VPI 2553 / EN-2).